The chain runs to 435 residues: Nicotinate phosphoribosyltransferase (435 aa).

Phosphohistidine; by autocatalysis is present on His230.

This sequence belongs to the NAPRTase family. In terms of processing, transiently phosphorylated on a His residue during the reaction cycle. Phosphorylation strongly increases the affinity for substrates and increases the rate of nicotinate D-ribonucleotide production. Dephosphorylation regenerates the low-affinity form of the enzyme, leading to product release.

The enzyme catalyses nicotinate + 5-phospho-alpha-D-ribose 1-diphosphate + ATP + H2O = nicotinate beta-D-ribonucleotide + ADP + phosphate + diphosphate. It participates in cofactor biosynthesis; NAD(+) biosynthesis; nicotinate D-ribonucleotide from nicotinate: step 1/1. Its function is as follows. Catalyzes the synthesis of beta-nicotinate D-ribonucleotide from nicotinate and 5-phospho-D-ribose 1-phosphate at the expense of ATP. The sequence is that of Nicotinate phosphoribosyltransferase from Vibrio cholerae serotype O1 (strain ATCC 39541 / Classical Ogawa 395 / O395).